A 329-amino-acid chain; its full sequence is Ig gamma-2C chain C region (329 aa).

Positions 1 to 97 are CH1; that stretch reads ARTTAPSVYP…ATKSNLIKRI (97 aa). An intrachain disulfide couples Cys-27 to Cys-82. The segment at 98–113 is hinge; the sequence is EPRRPKPRPPTDICSC. Residues 114-222 are CH2; the sequence is DDNLGRPSVF…PIEKTISKPR (109 aa). Cystine bridges form between Cys-143–Cys-203 and Cys-249–Cys-307. The tract at residues 223-329 is CH3; the sequence is GKARTPQVYT…QKNLSRSPGK (107 aa).

The chain is Ig gamma-2C chain C region from Rattus norvegicus (Rat).